A 256-amino-acid polypeptide reads, in one-letter code: tRNA pseudouridine synthase A (256 aa).

Catalysis depends on D55, which acts as the Nucleophile. Y113 is a binding site for substrate.

Belongs to the tRNA pseudouridine synthase TruA family. As to quaternary structure, homodimer.

It carries out the reaction uridine(38/39/40) in tRNA = pseudouridine(38/39/40) in tRNA. In terms of biological role, formation of pseudouridine at positions 38, 39 and 40 in the anticodon stem and loop of transfer RNAs. The protein is tRNA pseudouridine synthase A of Limosilactobacillus reuteri (strain DSM 20016) (Lactobacillus reuteri).